The sequence spans 124 residues: Large ribosomal subunit protein bL12 (124 aa).

The protein belongs to the bacterial ribosomal protein bL12 family. As to quaternary structure, homodimer. Part of the ribosomal stalk of the 50S ribosomal subunit. Forms a multimeric L10(L12)X complex, where L10 forms an elongated spine to which 2 to 4 L12 dimers bind in a sequential fashion. Binds GTP-bound translation factors.

Its function is as follows. Forms part of the ribosomal stalk which helps the ribosome interact with GTP-bound translation factors. Is thus essential for accurate translation. The protein is Large ribosomal subunit protein bL12 of Phytoplasma australiense.